A 201-amino-acid chain; its full sequence is Anthranilate synthase component 2 (201 aa).

One can recognise a Glutamine amidotransferase type-1 domain in the interval 1–199 (MLLMIDNYDS…LRQQGGVRGE (199 aa)). 52–54 (GPC) serves as a coordination point for L-glutamine. C79 serves as the catalytic Nucleophile; for GATase activity. L-glutamine is bound by residues Q83 and 129–130 (SL). Residues H173 and E175 each act as for GATase activity in the active site.

As to quaternary structure, heterotetramer consisting of two non-identical subunits: a beta subunit (TrpG) and a large alpha subunit (TrpE).

The catalysed reaction is chorismate + L-glutamine = anthranilate + pyruvate + L-glutamate + H(+). It participates in amino-acid biosynthesis; L-tryptophan biosynthesis; L-tryptophan from chorismate: step 1/5. Part of a heterotetrameric complex that catalyzes the two-step biosynthesis of anthranilate, an intermediate in the biosynthesis of L-tryptophan. In the first step, the glutamine-binding beta subunit (TrpG) of anthranilate synthase (AS) provides the glutamine amidotransferase activity which generates ammonia as a substrate that, along with chorismate, is used in the second step, catalyzed by the large alpha subunit of AS (TrpE) to produce anthranilate. In the absence of TrpG, TrpE can synthesize anthranilate directly from chorismate and high concentrations of ammonia. The sequence is that of Anthranilate synthase component 2 from Pseudomonas aeruginosa (strain ATCC 15692 / DSM 22644 / CIP 104116 / JCM 14847 / LMG 12228 / 1C / PRS 101 / PAO1).